The primary structure comprises 993 residues: MKLFPRSILITLVLSFALNLGIVTKIHAKDTLDSIVDILSGLTCETQGVGDLLRTEFSHTCIVAPFFTFAVMNLVSPVLYMNTFLKLKINDSDLFNDSNFGNFPGGQCTRENRIDPKNPELRFALCNNAKLIVSRAKSVAESALAIAKAVLTGSDPWDDIKTAWANKKKEYHVPYSGKPGDDGFAFDLGFPVIYWKVIQDKDRICVSTKGFTGDVPVGCKYMKEPFPKSMYNSFMDVADKDFIEDPNKTPTDPLALVSCSAAGDGCYQKAYNASKTAVVMTSPLIECMRQMIARLLISKDVCSFDNVSQVVNLVSRQDSVFFQFQVGMYKIVTAFLTLYVMFFGFKLLLAGEVPPKSEYINFILKMIFVTYFSIGINITPGNGSPYDRLDGMIQWAFPFLLDGINGLASWVMNAAPSGLCKFNNLSYDGTVSYIALWDALDCRVAHYLGLDILSTLLVENAYRSHDFLNFDFFSFSAPPYIYLLIPAIISGNMMLVSLALSYPLLVISVAAFMVNATIMCMISIVILGILAPLFVPMFLFAYTRNYFESWVKLMISFLLQPMVVVTFMITMFSVYDYGFYGKCQYKSKLIHNSIEDKIQGGITSKRDVLIFYINNDWDDTSQYPDKDAVESCQNSLGYMLNNPITTVFNFTKDSVSEIVGSKPGSTPTDKFLAKFQFLSGVVLGPGMFFMSPKVLFEKIKNILLALVMACFTLYLMYNFSSQLAEFAADMTEGVALNNVAIKPQAIFKAAMAVLATAGAATKGGDQIASRGGVGDLKAGQGGGASDLEVGKGGLPNDNIAASGGTSAPAVTTPTASSSVASSSPKTVSSEARSDVVTPPAPTEAVSPPPASIRTSISTLAPRVGKIIRDNNQESKKEIDNTPPSQEKVDNAAPQEKVDSTSKGTGVIDYSFNLKEHDNPTGVKQIRENAEIRDKRVKVEKAWNELVARGGGRVREQEGGEISERRANAEKAWDELVKSGVVTEKKDNSSNENS.

An N-terminal signal peptide occupies residues 1–28 (MKLFPRSILITLVLSFALNLGIVTKIHA). 7 consecutive transmembrane segments (helical) span residues 331–351 (IVTA…LLAG), 359–379 (YINF…INIT), 392–412 (MIQW…SWVM), 494–514 (MLVS…AFMV), 521–541 (MISI…FLFA), 554–574 (MISF…MFSV), and 699–719 (IKNI…MYNF). The interval 779 to 904 (GQGGGASDLE…EKVDSTSKGT (126 aa)) is disordered. Low complexity predominate over residues 805 to 829 (TSAPAVTTPTASSSVASSSPKTVSS). The span at 838–850 (PPAPTEAVSPPPA) shows a compositional bias: pro residues. Positions 866–879 (IIRDNNQESKKEID) are enriched in basic and acidic residues.

Belongs to the TrbL/VirB6 family.

The protein resides in the cell membrane. This is an uncharacterized protein from Rickettsia conorii (strain ATCC VR-613 / Malish 7).